The chain runs to 627 residues: uncharacterized protein (627 aa).

Disordered regions lie at residues 441 to 466 (EAVP…QGEN) and 608 to 627 (DLRG…TEDR). Residues 615–627 (DYERGKGESTEDR) show a composition bias toward basic and acidic residues.

This is an uncharacterized protein from Homo sapiens (Human).